A 361-amino-acid polypeptide reads, in one-letter code: Velvet complex subunit B (361 aa).

Disordered regions lie at residues 1 to 36 (MYAV…SLRQ) and 308 to 340 (NGAP…VLLR). The segment covering 23–35 (PSVQYPSGTTSLR) has biased composition (polar residues). The 307-residue stretch at 47–353 (QDGRSWSLQV…SASALRYRVS (307 aa)) folds into the Velvet domain. Low complexity predominate over residues 323 to 336 (SLNPSRSSPPKSSP).

It belongs to the velvet family. VelB subfamily. Component of the heterotrimeric velvet complex composed of laeA, veA and velB; VeA acting as a bridging protein between laeA and velB. Interacts with velA. Forms a heterodimeric complex with vosA; the formation of the velB-vosA complex is light-dependent. Interacts with vosA.

It is found in the nucleus. The protein resides in the cytoplasm. Functionally, component of the velvet transcription factor complex that controls sexual/asexual developmental ratio in response to light, promoting sexual development in the darkness while stimulating asexual sporulation under illumination. The velvet complex acts as a global regulator for secondary metabolite gene expression. Component of the velB-VosA heterodimeric complex that plays a dual role in activating genes associated with spore maturation and repressing certain development-associated genes. The velB-VosA complex binds DNA through the DNA-binding domain of vosA that recognizes an 11-nucleotide consensus sequence 5'-CTGGCCGCGGC-3' consisting of two motifs in the promoters of key developmental regulatory genes. Controls conidiophore formation. In Penicillium rubens (strain ATCC 28089 / DSM 1075 / NRRL 1951 / Wisconsin 54-1255) (Penicillium chrysogenum), this protein is Velvet complex subunit B.